We begin with the raw amino-acid sequence, 280 residues long: Nucleotide-binding protein Dgeo_0723 (280 aa).

Residue Gly-8–Ser-15 participates in ATP binding. A GTP-binding site is contributed by Asp-57 to Thr-60.

The protein belongs to the RapZ-like family.

Functionally, displays ATPase and GTPase activities. In Deinococcus geothermalis (strain DSM 11300 / CIP 105573 / AG-3a), this protein is Nucleotide-binding protein Dgeo_0723.